The chain runs to 557 residues: Dihydroxy-acid dehydratase (557 aa).

Cys-50 provides a ligand contact to [2Fe-2S] cluster. A Mg(2+)-binding site is contributed by Asp-82. Cys-123 contributes to the [2Fe-2S] cluster binding site. The Mg(2+) site is built by Asp-124 and Lys-125. Lys-125 is modified (N6-carboxylysine). Cys-195 is a binding site for [2Fe-2S] cluster. Mg(2+) is bound at residue Glu-447. Ser-473 (proton acceptor) is an active-site residue.

The protein belongs to the IlvD/Edd family. Homodimer. [2Fe-2S] cluster is required as a cofactor. It depends on Mg(2+) as a cofactor.

The catalysed reaction is (2R)-2,3-dihydroxy-3-methylbutanoate = 3-methyl-2-oxobutanoate + H2O. It carries out the reaction (2R,3R)-2,3-dihydroxy-3-methylpentanoate = (S)-3-methyl-2-oxopentanoate + H2O. Its pathway is amino-acid biosynthesis; L-isoleucine biosynthesis; L-isoleucine from 2-oxobutanoate: step 3/4. The protein operates within amino-acid biosynthesis; L-valine biosynthesis; L-valine from pyruvate: step 3/4. In terms of biological role, functions in the biosynthesis of branched-chain amino acids. Catalyzes the dehydration of (2R,3R)-2,3-dihydroxy-3-methylpentanoate (2,3-dihydroxy-3-methylvalerate) into 2-oxo-3-methylpentanoate (2-oxo-3-methylvalerate) and of (2R)-2,3-dihydroxy-3-methylbutanoate (2,3-dihydroxyisovalerate) into 2-oxo-3-methylbutanoate (2-oxoisovalerate), the penultimate precursor to L-isoleucine and L-valine, respectively. This chain is Dihydroxy-acid dehydratase, found in Nitrosomonas eutropha (strain DSM 101675 / C91 / Nm57).